Here is a 128-residue protein sequence, read N- to C-terminus: Large ribosomal subunit protein mL55 (128 aa).

The transit peptide at 1–33 directs the protein to the mitochondrion; the sequence is MAAVGSLLGRLRQSTVKATGPALRRLHTSSWRA. S85 bears the Phosphoserine mark.

Belongs to the mitochondrion-specific ribosomal protein mL55 family. In terms of assembly, component of the mitochondrial large ribosomal subunit (mt-LSU). Mature mammalian 55S mitochondrial ribosomes consist of a small (28S) and a large (39S) subunit. The 28S small subunit contains a 12S ribosomal RNA (12S mt-rRNA) and 30 different proteins. The 39S large subunit contains a 16S rRNA (16S mt-rRNA), a copy of mitochondrial valine transfer RNA (mt-tRNA(Val)), which plays an integral structural role, and 52 different proteins.

It localises to the mitochondrion. The chain is Large ribosomal subunit protein mL55 (MRPL55) from Homo sapiens (Human).